Reading from the N-terminus, the 282-residue chain is Protein OS-9 homolog (282 aa).

The N-terminal stretch at 1–23 (MRITQILLCLVIVALSSSSHVWS) is a signal peptide. Asparagine 94 is a glycosylation site (N-linked (GlcNAc...) asparagine). Positions 120–239 (EKCLFRQEGW…TVQCPTLCKH (120 aa)) constitute an MRH domain. A disulfide bond links cysteine 122 and cysteine 135. Residues tryptophan 129, tryptophan 130, and glutamine 142 each coordinate a mannooligosaccharide derivative. Residues asparagine 169 and asparagine 190 are each glycosylated (N-linked (GlcNAc...) asparagine). 2 disulfides stabilise this stretch: cysteine 194–cysteine 225 and cysteine 209–cysteine 237. 4 residues coordinate a mannooligosaccharide derivative: aspartate 195, arginine 201, glutamate 221, and tyrosine 227. The span at 262–276 (DATRNKEEQAVDESP) shows a compositional bias: basic and acidic residues. The segment at 262 to 282 (DATRNKEEQAVDESPKMIADS) is disordered.

This sequence belongs to the OS-9 family. As to quaternary structure, interacts with HRD3A.

The protein localises to the endoplasmic reticulum. In terms of biological role, lectin which functions in endoplasmic reticulum (ER) quality control and ER-associated degradation (ERAD). May bind terminally misfolded non-glycosylated proteins as well as improperly folded glycoproteins, retain them in the ER, and possibly transfer them to the ubiquitination machinery and promote their degradation. Targets the misfolded LRR receptor kinase BRI1 and the misfolded receptor-like kinase EFR. The chain is Protein OS-9 homolog from Arabidopsis thaliana (Mouse-ear cress).